The primary structure comprises 144 residues: Putative HTH-type transcriptional regulator aq_268 (144 aa).

One can recognise an HTH rrf2-type domain in the interval 2-133; the sequence is IFSDTVRYAL…KGTTIKDLIN (132 aa).

This chain is Putative HTH-type transcriptional regulator aq_268, found in Aquifex aeolicus (strain VF5).